A 355-amino-acid chain; its full sequence is (3aS,4S,5R,7aS)-5-hydroxy-7a-methyl-1-oxo-octahydro-1H-indene-4-carboxyl-CoA dehydrogenase (355 aa).

Residues 21–23 (GMG), 173–175 (AGG), and 196–197 (GT) contribute to the FMN site.

This sequence belongs to the nitronate monooxygenase family.

It carries out the reaction (3aS,4S,5R,7aS)-5-hydroxy-7a-methyl-1-oxo-octahydro-1H-indene-4-carboxyl-CoA + NAD(+) = (5R,7aS)-5-hydroxy-7a-methyl-1-oxo-2,3,5,6,7,7a-hexahydro-1H-indene-carboxyl-CoA + NADH + H(+). The protein operates within steroid metabolism; cholesterol degradation. With respect to regulation, requires the presence of IpdF. In terms of biological role, involved in the final steps of cholesterol and steroid degradation. Probably catalyzes the introduction of a double bound into the C ring of 5OH-HIC-CoA, leading to the formation of (5R,7aS)-5-hydroxy-7a-methyl-1-oxo-3,5,6,7-tetrahydro-2H-indene-4-carboxyl-CoA. The protein is (3aS,4S,5R,7aS)-5-hydroxy-7a-methyl-1-oxo-octahydro-1H-indene-4-carboxyl-CoA dehydrogenase of Mycobacterium tuberculosis (strain ATCC 25618 / H37Rv).